The primary structure comprises 359 residues: N-acetylneuraminate-9-phosphate synthase (359 aa).

An N6-acetyllysine mark is found at Lys61, Lys74, and Lys79. Ser275 bears the Phosphoserine mark. Lys290 is modified (N6-acetyllysine). One can recognise an AFP-like domain in the interval 294-353 (SVVAKVKIPEGTILTMDMLTVKVGEPKGYPPEDIFNLVGKKVLVTVEEDDTIMEELVDNH).

In terms of tissue distribution, ubiquitous.

The enzyme catalyses aldehydo-N-acetyl-D-mannosamine 6-phosphate + phosphoenolpyruvate + H2O = N-acetylneuraminate 9-phosphate + phosphate. The catalysed reaction is aldehydo-D-mannose 6-phosphate + phosphoenolpyruvate + H2O = 3-deoxy-D-glycero-beta-D-galacto-non-2-ulopyranosonate 9-phosphate + phosphate. In terms of biological role, catalyzes the condensation of phosphoenolpyruvate (PEP) and N-acetylmannosamine 6-phosphate (ManNAc-6-P) to synthesize N-acetylneuraminate-9-phosphate (Neu5Ac-9-P). Also catalyzes the condensation of PEP and D-mannose 6-phosphate (Man-6-P) to produce 3-deoxy-D-glycero-beta-D-galacto-non-2-ulopyranosonate 9-phosphate (KDN-9-P). Neu5Ac-9-P and KDN-9-P are the phosphorylated forms of sialic acids N-acetylneuraminic acid (Neu5Ac) and deaminoneuraminic acid (KDN), respectively. Required for brain and skeletal development. The sequence is that of N-acetylneuraminate-9-phosphate synthase from Homo sapiens (Human).